A 453-amino-acid polypeptide reads, in one-letter code: uncharacterized protein (453 aa).

The protein to yeast RIT1.

This is an uncharacterized protein from Schizosaccharomyces pombe (strain 972 / ATCC 24843) (Fission yeast).